Here is a 695-residue protein sequence, read N- to C-terminus: MAQLDTLDIVVLVVLLVGSVAYFTKGSYWAVPKDPYAAANSAMNGAAKTGKTRDIIQKMEETGKNCVIFYGSQTGTAEDYASRLAKEGSQRFGLKTMVADLEDYDYENLDKFPEDKIAFFVLATYGEGEPTDNAVEFYQFITGEDVAFESGASAEEKPLSSLKYVAFGLGNNTYEHYNAMVRHVDAALTKLGAQRIGTAGEGDDGAGTMEEDFLAWKEPMWAALSESMNLQEREAVYEPVFSVIEDESLSPEDDSVYLGEPTQGHLSGSPKGPYSAHNPYIAPIVESRELFTAKDRNCLHMEIGIAGSNLTYQTGDHIAIWPTNAGVEVDRFLEVFGIEKKRHTVINIKGLDVTAKVPIPTPTTYDAAVRFYMEICAPVSRQFVSSLVPFAPDEESKAEIVRLGNDKDYFHEKISNQCFNIAQALQNITSKPFSAVPFSLLIEGLNRLQPRYYSISSSSLVQKDKISITAVVESVRLPGASHIVKGVTTNYLLALKQKQNGDPSPDPHGLTYAITGPRNKYDGIHVPVHVRHSNFKLPSDPSKPIIMVGPGTGVAPFRGFIQERAALAESGKDVGPTILFFGCRNRNEDFLYKEEWKVYQEKLGDKLKIITAFSRETAKKVYVQHRLQEHADLVSDLLKQKATFYVCGDAANMAREVNLVLGQIIAKSRGLPAEKGEEMVKHMRSSGSYQEDVWS.

The Lumenal segment spans residues 1–8 (MAQLDTLD). The helical transmembrane segment at 9 to 31 (IVVLVVLLVGSVAYFTKGSYWAV) threads the bilayer. Residues 32 to 695 (PKDPYAAANS…SGSYQEDVWS (664 aa)) lie on the Cytoplasmic side of the membrane. In terms of domain architecture, Flavodoxin-like spans 66-221 (CVIFYGSQTG…DFLAWKEPMW (156 aa)). FMN-binding positions include 72-77 (SQTGTA), 123-126 (ATYG), 169-178 (LGNNTYEHYN), and Asp-204. In terms of domain architecture, FAD-binding FR-type spans 277–538 (HNPYIAPIVE…HVRHSNFKLP (262 aa)). Arg-296 is a binding site for NADP(+). FAD is bound by residues 451–454 (RYYS), 469–471 (TAV), and 486–489 (GVTT). Residues Thr-552, 614–615 (SR), 620–624 (KVYVQ), and Glu-656 contribute to the NADP(+) site. Residue Trp-694 participates in FAD binding.

This sequence belongs to the NADPH--cytochrome P450 reductase family. In the N-terminal section; belongs to the flavodoxin family. It in the C-terminal section; belongs to the flavoprotein pyridine nucleotide cytochrome reductase family. Requires FAD as cofactor. FMN serves as cofactor.

It is found in the endoplasmic reticulum membrane. The protein localises to the mitochondrion outer membrane. Its subcellular location is the cell membrane. It catalyses the reaction 2 oxidized [cytochrome P450] + NADPH = 2 reduced [cytochrome P450] + NADP(+) + H(+). Its function is as follows. This enzyme is required for electron transfer from NADP to cytochrome P450 in microsomes. It can also provide electron transfer to heme oxygenase and cytochrome B5. Involved in ergosterol biosynthesis. The sequence is that of NADPH--cytochrome P450 reductase from Aspergillus fumigatus (strain ATCC MYA-4609 / CBS 101355 / FGSC A1100 / Af293) (Neosartorya fumigata).